The following is a 588-amino-acid chain: Complement component C8 beta chain (588 aa).

An N-terminal signal peptide occupies residues 1–30 (MFRVAIPRSALNLHSCLLHVTLSLVLISKA). Positions 31-46 (AITTAGNEDSDVREAR) are excised as a propeptide. Residues 58–113 (DCVISDWSAWSRCDTCQKKRYRYAKLDQPSQFGGEPCHFHDMEDEACDVPDRYTCD) enclose the TSP type-1 1 domain. Intrachain disulfides connect Cys59–Cys94, Cys70–Cys104, Cys73–Cys112, Cys118–Cys129, Cys123–Cys142, Cys136–Cys151, and Cys158–Cys196. C-linked (Man) tryptophan glycosylation is found at Trp64 and Trp67. An LDL-receptor class A domain is found at 115 to 152 (IPLCEGFLCTQTGRCIHRTLQCNGEDDCGDMSDEVGCK). Residues Leu134, Asn137, Glu139, Asp141, Asp147, and Glu148 each contribute to the Ca(2+) site. Residues 154–500 (VPKPCRQEAE…EYLAESSSCR (347 aa)) enclose the MACPF domain. Transmembrane regions (beta stranded) follow at residues 248-255 (TIVSIGFA), 258-265 (GIAEFGFN), 375-382 (TQAGLKIG), and 388-395 (VYVSAGIE). Cystine bridges form between Cys374–Cys399, Cys499–Cys547, Cys501–Cys517, Cys504–Cys519, and Cys521–Cys530. One can recognise an EGF-like domain in the interval 501–531 (CAPCHNNGVAVLRGTRCDCVCPTGYTGRGCE). The 47-residue stretch at 542–588 (DGSWSCWGAWSSCSGRKMSRSRQCNNPVPSDGGLACRGLQQESTDCF) folds into the TSP type-1 2 domain. 2 C-linked (Man) tryptophan glycosylation sites follow: Trp548 and Trp551. A disulfide bond links Cys554 and Cys587.

This sequence belongs to the complement C6/C7/C8/C9 family. In terms of assembly, heterotrimer of 3 chains: alpha (C8A), beta (C8B) and gamma (C8G); the alpha and gamma chains are disulfide bonded. Component of the membrane attack complex (MAC), composed of complement C5b, C6, C7, C8A, C8B, C8G and multiple copies of the pore-forming subunit C9.

Its subcellular location is the secreted. It is found in the target cell membrane. Its function is as follows. Component of the membrane attack complex (MAC), a multiprotein complex activated by the complement cascade, which inserts into a target cell membrane and forms a pore, leading to target cell membrane rupture and cell lysis. The MAC is initiated by proteolytic cleavage of C5 into complement C5b in response to the classical, alternative, lectin and GZMK complement pathways. The complement pathways consist in a cascade of proteins that leads to phagocytosis and breakdown of pathogens and signaling that strengthens the adaptive immune system. C8B, together with C8A and C8G, inserts into the target membrane, but does not form pores by itself. During MAC assembly, associates with C5b, C6 and C7 to form the C5b8 intermediate complex that inserts into the target membrane and traverses the bilayer increasing membrane rigidity. The protein is Complement component C8 beta chain (c8b) of Paralichthys olivaceus (Bastard halibut).